Reading from the N-terminus, the 138-residue chain is Ribosomal RNA large subunit methyltransferase H (138 aa).

S-adenosyl-L-methionine-binding positions include L57, G86, and 105 to 110 (LSPLTF).

It belongs to the RNA methyltransferase RlmH family. As to quaternary structure, homodimer.

It localises to the cytoplasm. It catalyses the reaction pseudouridine(1915) in 23S rRNA + S-adenosyl-L-methionine = N(3)-methylpseudouridine(1915) in 23S rRNA + S-adenosyl-L-homocysteine + H(+). In terms of biological role, specifically methylates the pseudouridine at position 1915 (m3Psi1915) in 23S rRNA. This chain is Ribosomal RNA large subunit methyltransferase H, found in Prochlorococcus marinus (strain MIT 9312).